The chain runs to 141 residues: Small ribosomal subunit protein uS19 (141 aa).

The protein belongs to the universal ribosomal protein uS19 family.

In terms of biological role, protein S19 forms a complex with S13 that binds strongly to the 16S ribosomal RNA. In Thermofilum pendens (strain DSM 2475 / Hrk 5), this protein is Small ribosomal subunit protein uS19.